The primary structure comprises 386 residues: S-adenosylmethionine synthase (386 aa).

His-16 serves as a coordination point for ATP. Asp-18 contacts Mg(2+). Glu-44 is a binding site for K(+). Residues Glu-57 and Gln-100 each coordinate L-methionine. The segment at 100–110 is flexible loop; that stretch reads QSPDINQGVDR. ATP contacts are provided by residues 164 to 166, 230 to 231, Asp-239, 245 to 246, Ala-262, and Lys-266; these read DGK, KF, and RK. Asp-239 provides a ligand contact to L-methionine. Position 270 (Lys-270) interacts with L-methionine.

It belongs to the AdoMet synthase family. In terms of assembly, homotetramer; dimer of dimers. Mg(2+) is required as a cofactor. K(+) serves as cofactor.

Its subcellular location is the cytoplasm. It catalyses the reaction L-methionine + ATP + H2O = S-adenosyl-L-methionine + phosphate + diphosphate. It functions in the pathway amino-acid biosynthesis; S-adenosyl-L-methionine biosynthesis; S-adenosyl-L-methionine from L-methionine: step 1/1. In terms of biological role, catalyzes the formation of S-adenosylmethionine (AdoMet) from methionine and ATP. The overall synthetic reaction is composed of two sequential steps, AdoMet formation and the subsequent tripolyphosphate hydrolysis which occurs prior to release of AdoMet from the enzyme. The protein is S-adenosylmethionine synthase of Helicobacter hepaticus (strain ATCC 51449 / 3B1).